A 392-amino-acid chain; its full sequence is MTIPDVPTQTLPDEGEIGFVHIGSLTTEAGAVIDDVHIAVQRWGELSPTRDNVVVVLHALTGDSHVTGPAGPGHPTGGWWDEMVGPGAPIDTDRWCAVATNVLGGCRGSTGPSSRTRDGKPWGSRFPRISIRDQVEADIAALAALGIDEVAAVVGGSMGGARALEWIVGHPSRVRAGLLLAVGARATADQIGTQCTQIAAIKSDPNWQGGDYHDTGRTPDAGLAIARRFAHLTYRGEVELDTRFGNDAQLDEDPANGGRYAVQSYLEYQGVKLVERFDAGSYVVLTEALNSHDVGRARGGVRKALRSCPVPVVVGGITSDRLYPLRLQQELAEQLPGCAELQVVDSICGHDGFLVESEAVGEMIRKTLLLAGSQSAGPGGAGPGSRKGTTRR.

Residues 52-356 (NVVVVLHALT…ICGHDGFLVE (305 aa)) form the AB hydrolase-1 domain. Ser157 serves as the catalytic Nucleophile. Substrate is bound at residue Arg227. Residues Asp320 and His350 contribute to the active site. Residue Asp351 coordinates substrate. The tract at residues 373-392 (SQSAGPGGAGPGSRKGTTRR) is disordered.

The protein belongs to the AB hydrolase superfamily. MetX family. In terms of assembly, homodimer.

The protein localises to the cytoplasm. It carries out the reaction L-homoserine + acetyl-CoA = O-acetyl-L-homoserine + CoA. It functions in the pathway amino-acid biosynthesis; L-methionine biosynthesis via de novo pathway; O-acetyl-L-homoserine from L-homoserine: step 1/1. In terms of biological role, transfers an acetyl group from acetyl-CoA to L-homoserine, forming acetyl-L-homoserine. The protein is Homoserine O-acetyltransferase of Mycobacterium avium (strain 104).